Here is a 916-residue protein sequence, read N- to C-terminus: Probable serine/threonine-protein kinase DDB_G0267514 (916 aa).

3 disordered regions span residues 283–311 (SGGG…SGGS), 461–518 (NNNQ…SPLD), and 550–646 (FNNQ…EPPS). Composition is skewed to low complexity over residues 461–493 (NNNQ…QQQP) and 550–622 (FNNQ…LINN). The span at 623-646 (HSPNQYNNQGNILKNSGSVVEPPS) shows a compositional bias: polar residues. Positions 662–916 (LKISSKLGEG…EILNLLNEIP (255 aa)) constitute a Protein kinase domain. Residues 668-676 (LGEGTFGVV) and Lys-689 each bind ATP. Asp-784 (proton acceptor) is an active-site residue.

It belongs to the protein kinase superfamily. TKL Ser/Thr protein kinase family.

The enzyme catalyses L-seryl-[protein] + ATP = O-phospho-L-seryl-[protein] + ADP + H(+). The catalysed reaction is L-threonyl-[protein] + ATP = O-phospho-L-threonyl-[protein] + ADP + H(+). This chain is Probable serine/threonine-protein kinase DDB_G0267514, found in Dictyostelium discoideum (Social amoeba).